A 325-amino-acid chain; its full sequence is Transcription initiation factor IIB (325 aa).

Residues 19-52 form a TFIIB-type zinc finger; that stretch reads NKLWCMVCRIQDPDIIEDYAKGDLICRGCGVVVG. Residues Cys-23, Cys-26, Cys-44, and Cys-47 each coordinate Zn(2+). Repeat copies occupy residues 131-207 and 227-303.

Belongs to the TFIIB family.

Its subcellular location is the nucleus. General transcription factor that plays a role in transcription initiation by RNA polymerase II (Pol II). Involved in the pre-initiation complex (PIC) formation and Pol II recruitment at promoter DNA. The polypeptide is Transcription initiation factor IIB (gtf2b) (Dictyostelium discoideum (Social amoeba)).